A 204-amino-acid polypeptide reads, in one-letter code: Ribonuclease HII (204 aa).

The RNase H type-2 domain maps to 16–204 (ESIAGCDEVG…RRSFLKKILK (189 aa)). 3 residues coordinate a divalent metal cation: D22, E23, and D120.

Belongs to the RNase HII family. Requires Mn(2+) as cofactor. Mg(2+) is required as a cofactor.

It is found in the cytoplasm. The catalysed reaction is Endonucleolytic cleavage to 5'-phosphomonoester.. Its function is as follows. Endonuclease that specifically degrades the RNA of RNA-DNA hybrids. The polypeptide is Ribonuclease HII (Alkaliphilus metalliredigens (strain QYMF)).